The sequence spans 525 residues: Phosphatidylinositol 4-kinase alpha 2 (525 aa).

Residues 163–278 form a pleckstrin homology (PH) domain conferring phosphoinositide binding specificity region; it reads SDVRQHIVDG…VKPQACIFKV (116 aa). Residues 239–509 form the PI3K/PI4K catalytic domain; sequence VDSGIPLQSA…VCTDAYNKWT (271 aa). Positions 245–251 are G-loop; the sequence is LQSAAKV. A catalytic loop region spans residues 373–381; it reads QPKDRHNGN. The segment at 392–417 is activation loop; sequence HIDFGFILETSPGGNMRFENAHFKLS.

It belongs to the PI3/PI4-kinase family. Type III PI4K subfamily.

The protein resides in the membrane. The catalysed reaction is a 1,2-diacyl-sn-glycero-3-phospho-(1D-myo-inositol) + ATP = a 1,2-diacyl-sn-glycero-3-phospho-(1D-myo-inositol 4-phosphate) + ADP + H(+). In terms of biological role, acts on phosphatidylinositol (PtdIns) in the first committed step in the production of the second messenger inositol-1,4,5,-trisphosphate. The protein is Phosphatidylinositol 4-kinase alpha 2 (PI4KA2) of Arabidopsis thaliana (Mouse-ear cress).